A 376-amino-acid polypeptide reads, in one-letter code: Queuine tRNA-ribosyltransferase (376 aa).

Asp-90 acts as the Proton acceptor in catalysis. Substrate contacts are provided by residues 90–94 (DSGGF), Asp-144, Gln-193, and Gly-220. The tract at residues 251–257 (GVGTPED) is RNA binding. The active-site Nucleophile is the Asp-270. Residues 275 to 279 (TRNAR) form an RNA binding; important for wobble base 34 recognition region. 4 residues coordinate Zn(2+): Cys-308, Cys-310, Cys-313, and His-339.

The protein belongs to the queuine tRNA-ribosyltransferase family. Homodimer. Within each dimer, one monomer is responsible for RNA recognition and catalysis, while the other monomer binds to the replacement base PreQ1. The cofactor is Zn(2+).

The enzyme catalyses 7-aminomethyl-7-carbaguanine + guanosine(34) in tRNA = 7-aminomethyl-7-carbaguanosine(34) in tRNA + guanine. It participates in tRNA modification; tRNA-queuosine biosynthesis. Functionally, catalyzes the base-exchange of a guanine (G) residue with the queuine precursor 7-aminomethyl-7-deazaguanine (PreQ1) at position 34 (anticodon wobble position) in tRNAs with GU(N) anticodons (tRNA-Asp, -Asn, -His and -Tyr). Catalysis occurs through a double-displacement mechanism. The nucleophile active site attacks the C1' of nucleotide 34 to detach the guanine base from the RNA, forming a covalent enzyme-RNA intermediate. The proton acceptor active site deprotonates the incoming PreQ1, allowing a nucleophilic attack on the C1' of the ribose to form the product. After dissociation, two additional enzymatic reactions on the tRNA convert PreQ1 to queuine (Q), resulting in the hypermodified nucleoside queuosine (7-(((4,5-cis-dihydroxy-2-cyclopenten-1-yl)amino)methyl)-7-deazaguanosine). This Cupriavidus taiwanensis (strain DSM 17343 / BCRC 17206 / CCUG 44338 / CIP 107171 / LMG 19424 / R1) (Ralstonia taiwanensis (strain LMG 19424)) protein is Queuine tRNA-ribosyltransferase.